Here is a 197-residue protein sequence, read N- to C-terminus: LexA repressor (197 aa).

The segment at residues 28 to 47 (VREIARRFRITPRGALLHLI) is a DNA-binding region (H-T-H motif). Catalysis depends on for autocatalytic cleavage activity residues serine 119 and lysine 156.

Belongs to the peptidase S24 family. As to quaternary structure, homodimer.

It carries out the reaction Hydrolysis of Ala-|-Gly bond in repressor LexA.. Its function is as follows. Represses a number of genes involved in the response to DNA damage (SOS response), including recA and lexA. In the presence of single-stranded DNA, RecA interacts with LexA causing an autocatalytic cleavage which disrupts the DNA-binding part of LexA, leading to derepression of the SOS regulon and eventually DNA repair. In Thermotoga maritima (strain ATCC 43589 / DSM 3109 / JCM 10099 / NBRC 100826 / MSB8), this protein is LexA repressor.